Reading from the N-terminus, the 60-residue chain is Ixodegrin-Ip (60 aa).

Positions 1–21 (MNAAFIAALFILGALTLDAMA) are cleaved as a signal peptide. Positions 49 to 51 (RGD) match the Cell attachment site motif.

It belongs to the ixodegrin family. In terms of processing, contains 3 disulfide bonds. Expressed in salivary glands.

Its subcellular location is the secreted. Tick salivary platelet aggregation inhibitor that plays an important part in the anti-hemostatic strategy of ticks. Inhibits platelet aggregation induced by ADP, thrombin and thromboxane A2 (TXA2). Blocks platelet adhesion to soluble collagen (most probably through the binding to alpha-2/beta-1 integrin (ITGA2/ITGB1)) and binds to purified glycoprotein IIb/IIIa (ITGA2B/ITGB3) in a dose-dependent manner. In vivo, reduces thrombus weight effectively in a rat arteriovenous shunt model and inhibits thrombosis in a carrageenan-induced mouse tail thrombosis model. This Ixodes pacificus (Western black-legged tick) protein is Ixodegrin-Ip.